Here is a 221-residue protein sequence, read N- to C-terminus: Probable septum site-determining protein MinC (221 aa).

Belongs to the MinC family. As to quaternary structure, interacts with MinD and FtsZ.

Cell division inhibitor that blocks the formation of polar Z ring septums. Rapidly oscillates between the poles of the cell to destabilize FtsZ filaments that have formed before they mature into polar Z rings. Prevents FtsZ polymerization. The sequence is that of Probable septum site-determining protein MinC from Shewanella woodyi (strain ATCC 51908 / MS32).